Here is a 315-residue protein sequence, read N- to C-terminus: tRNA pseudouridine synthase B (315 aa).

Aspartate 54 acts as the Nucleophile in catalysis.

This sequence belongs to the pseudouridine synthase TruB family. Type 1 subfamily.

The catalysed reaction is uridine(55) in tRNA = pseudouridine(55) in tRNA. Functionally, responsible for synthesis of pseudouridine from uracil-55 in the psi GC loop of transfer RNAs. This is tRNA pseudouridine synthase B from Cupriavidus pinatubonensis (strain JMP 134 / LMG 1197) (Cupriavidus necator (strain JMP 134)).